Reading from the N-terminus, the 205-residue chain is Penta-EF hand domain-containing protein 2 (205 aa).

3 EF-hand domains span residues 45 to 75 (EMQS…GGTP), 76 to 111 (LGIE…INNL), and 119 to 141 (DRNF…SGFQ). D54, N56, S58, T60, E65, D89, N91, N93, Q95, and E100 together coordinate Ca(2+).

It belongs to the Peflin/Sorcin family. As to quaternary structure, in contrast to pefA, does not form homodimers in presence of Ca(2+). May form heterodimers with pefA.

The protein resides in the cytoplasm. It is found in the membrane. The protein is Penta-EF hand domain-containing protein 2 (pefB) of Dictyostelium discoideum (Social amoeba).